The chain runs to 382 residues: Gap junction alpha-1 protein (382 aa).

The Cytoplasmic portion of the chain corresponds to 2–23; sequence GDWSALGKLLDKVQAYSTAGGK. Ser5 bears the Phosphoserine mark. A helical membrane pass occupies residues 24–44; it reads VWLSVLFIFRILLLGTAVESA. The Extracellular portion of the chain corresponds to 45–76; the sequence is WGDEQSAFRCNTQQPGCENVCYDKSFPISHVR. 2 disulfides stabilise this stretch: Cys54–Cys192 and Cys187–Cys198. The helical transmembrane segment at 77–97 threads the bilayer; it reads FWVLQIIFVSVPTLLYLAHVF. The Cytoplasmic segment spans residues 98 to 155; that stretch reads YVMRKEEKLNKKEEELKVAQTDGVNVDMHLKQIEIKKFKYGIEEHGKVKMRGGLLRTY. A Glycyl lysine isopeptide (Lys-Gly) (interchain with G-Cter in SUMO) cross-link involves residue Lys144. A helical transmembrane segment spans residues 156-176; the sequence is IISILFKSIFEVAFLLIQWYI. Topologically, residues 177-207 are extracellular; sequence YGFSLSAVYTCKRDPCPHQVDCFLSRPTEKT. A helical membrane pass occupies residues 208–228; the sequence is IFIIFMLVVSLVSLALNIIEL. At 229–382 the chain is on the cytoplasmic side; it reads FYVFFKGVKD…SRPRPDDLEI (154 aa). Residue Lys237 forms a Glycyl lysine isopeptide (Lys-Gly) (interchain with G-Cter in SUMO) linkage. The segment at 244–382 is interaction with NOV; that stretch reads SDPYHATSGA…SRPRPDDLEI (139 aa). Residue Tyr247 is modified to Phosphotyrosine. Phosphoserine is present on residues Ser255 and Ser262. The segment at 264–382 is interaction with UBQLN4; it reads KYAYFNGCSS…SRPRPDDLEI (119 aa). S-nitrosocysteine is present on Cys271. Thr275 is modified (phosphothreonine). Phosphoserine is present on residues Ser306 and Ser314. The segment covering 317–332 has biased composition (polar residues); it reads QNRMGQAGSTISNSHA. A disordered region spans residues 317–382; that stretch reads QNRMGQAGST…SRPRPDDLEI (66 aa). Position 325 is a phosphoserine; by CK1 (Ser325). Thr326 is subject to Phosphothreonine. A phosphoserine; by CK1 mark is found at Ser328 and Ser330. Residues Ser344 and Ser365 each carry the phosphoserine modification. The segment covering 362–374 has biased composition (low complexity); it reads RPSSRASSRASSR. The residue at position 368 (Ser368) is a Phosphoserine; by PKC/PRKCG and PKC/PRKCD. A phosphoserine mark is found at Ser369 and Ser373.

The protein belongs to the connexin family. Alpha-type (group II) subfamily. As to quaternary structure, a connexon is composed of a hexamer of connexins. Interacts (via C-terminus) with TJP1. Interacts (via C-terminus) with SRC (via SH3 domain). Interacts (not ubiquitinated) with UBQLN4 (via UBA domain). Interacts with SGSM3 and CNST. Interacts with RIC1/CIP150. Interacts with CSNK1D. Interacts with NOV. Interacts with TMEM65. Interacts with ANK3/ANKG and PKP2. In terms of processing, phosphorylated at Ser-368 by PRKCG; phosphorylation induces disassembly of gap junction plaques and inhibition of gap junction activity. Phosphorylation at Ser-325, Ser-328 and Ser-330 by CK1 modulates gap junction assembly. Phosphorylation at Ser-368 by PRKCD triggers its internalization into small vesicles leading to proteasome-mediated degradation. Sumoylated with SUMO1, SUMO2 and SUMO3, which may regulate the level of functional Cx43 gap junctions at the plasma membrane. May be desumoylated by SENP1 or SENP2. Post-translationally, S-nitrosylation at Cys-271 is enriched at the muscle endothelial gap junction in arteries, it augments channel permeability and may regulate of smooth muscle cell to endothelial cell communication. In terms of processing, acetylated in the developing cortex; leading to delocalization from the cell membrane. In terms of tissue distribution, expressed at intercalated disks in the heart (at protein level). Expressed in the fetal cochlea.

Its subcellular location is the cell membrane. It localises to the cell junction. The protein localises to the gap junction. It is found in the endoplasmic reticulum. Its function is as follows. Gap junction protein that acts as a regulator of bladder capacity. A gap junction consists of a cluster of closely packed pairs of transmembrane channels, the connexons, through which materials of low MW diffuse from one cell to a neighboring cell. May play a critical role in the physiology of hearing by participating in the recycling of potassium to the cochlear endolymph. Negative regulator of bladder functional capacity: acts by enhancing intercellular electrical and chemical transmission, thus sensitizing bladder muscles to cholinergic neural stimuli and causing them to contract. May play a role in cell growth inhibition through the regulation of NOV expression and localization. Plays an essential role in gap junction communication in the ventricles. The chain is Gap junction alpha-1 protein (GJA1) from Homo sapiens (Human).